Reading from the N-terminus, the 285-residue chain is Phosphatidylserine decarboxylase proenzyme (285 aa).

Residues D89, H146, and S252 each act as charge relay system; for autoendoproteolytic cleavage activity in the active site. The active-site Schiff-base intermediate with substrate; via pyruvic acid; for decarboxylase activity is S252. The residue at position 252 (S252) is a Pyruvic acid (Ser); by autocatalysis.

Belongs to the phosphatidylserine decarboxylase family. PSD-B subfamily. Prokaryotic type I sub-subfamily. As to quaternary structure, heterodimer of a large membrane-associated beta subunit and a small pyruvoyl-containing alpha subunit. Pyruvate is required as a cofactor. Is synthesized initially as an inactive proenzyme. Formation of the active enzyme involves a self-maturation process in which the active site pyruvoyl group is generated from an internal serine residue via an autocatalytic post-translational modification. Two non-identical subunits are generated from the proenzyme in this reaction, and the pyruvate is formed at the N-terminus of the alpha chain, which is derived from the carboxyl end of the proenzyme. The autoendoproteolytic cleavage occurs by a canonical serine protease mechanism, in which the side chain hydroxyl group of the serine supplies its oxygen atom to form the C-terminus of the beta chain, while the remainder of the serine residue undergoes an oxidative deamination to produce ammonia and the pyruvoyl prosthetic group on the alpha chain. During this reaction, the Ser that is part of the protease active site of the proenzyme becomes the pyruvoyl prosthetic group, which constitutes an essential element of the active site of the mature decarboxylase.

It localises to the cell membrane. It carries out the reaction a 1,2-diacyl-sn-glycero-3-phospho-L-serine + H(+) = a 1,2-diacyl-sn-glycero-3-phosphoethanolamine + CO2. It participates in phospholipid metabolism; phosphatidylethanolamine biosynthesis; phosphatidylethanolamine from CDP-diacylglycerol: step 2/2. In terms of biological role, catalyzes the formation of phosphatidylethanolamine (PtdEtn) from phosphatidylserine (PtdSer). The protein is Phosphatidylserine decarboxylase proenzyme of Vibrio campbellii (strain ATCC BAA-1116).